The following is a 147-amino-acid chain: Hemoglobin subunit beta-1 (147 aa).

In terms of domain architecture, Globin spans 3-147 (EWTDKERSII…VVSALGKQYH (145 aa)). Heme b contacts are provided by H64 and H93.

Belongs to the globin family. As to quaternary structure, heterotetramer of two alpha chains and two beta chains. As to expression, red blood cells.

Involved in oxygen transport from gills to the various peripheral tissues. The polypeptide is Hemoglobin subunit beta-1 (hbb1) (Pagothenia borchgrevinki (Bald rockcod)).